The primary structure comprises 348 residues: Probable dual-specificity RNA methyltransferase RlmN (348 aa).

The Proton acceptor role is filled by Glu-93. The Radical SAM core domain occupies 99-333 (TEKRLTACLS…VSLRKSRGSD (235 aa)). Cys-106 and Cys-338 are oxidised to a cystine. [4Fe-4S] cluster is bound by residues Cys-113, Cys-117, and Cys-120. Residues 160–161 (GE), Ser-190, 219–221 (SLH), and Asn-295 each bind S-adenosyl-L-methionine. Residue Cys-338 is the S-methylcysteine intermediate of the active site.

This sequence belongs to the radical SAM superfamily. RlmN family. Requires [4Fe-4S] cluster as cofactor.

The protein resides in the cytoplasm. The enzyme catalyses adenosine(2503) in 23S rRNA + 2 reduced [2Fe-2S]-[ferredoxin] + 2 S-adenosyl-L-methionine = 2-methyladenosine(2503) in 23S rRNA + 5'-deoxyadenosine + L-methionine + 2 oxidized [2Fe-2S]-[ferredoxin] + S-adenosyl-L-homocysteine. The catalysed reaction is adenosine(37) in tRNA + 2 reduced [2Fe-2S]-[ferredoxin] + 2 S-adenosyl-L-methionine = 2-methyladenosine(37) in tRNA + 5'-deoxyadenosine + L-methionine + 2 oxidized [2Fe-2S]-[ferredoxin] + S-adenosyl-L-homocysteine. In terms of biological role, specifically methylates position 2 of adenine 2503 in 23S rRNA and position 2 of adenine 37 in tRNAs. This is Probable dual-specificity RNA methyltransferase RlmN from Prochlorococcus marinus (strain MIT 9515).